Reading from the N-terminus, the 459-residue chain is UDP-N-acetylmuramoyl-tripeptide--D-alanyl-D-alanine ligase (459 aa).

Residue Gly-121 to Thr-127 coordinates ATP.

It belongs to the MurCDEF family. MurF subfamily.

Its subcellular location is the cytoplasm. It carries out the reaction D-alanyl-D-alanine + UDP-N-acetyl-alpha-D-muramoyl-L-alanyl-gamma-D-glutamyl-meso-2,6-diaminopimelate + ATP = UDP-N-acetyl-alpha-D-muramoyl-L-alanyl-gamma-D-glutamyl-meso-2,6-diaminopimeloyl-D-alanyl-D-alanine + ADP + phosphate + H(+). It participates in cell wall biogenesis; peptidoglycan biosynthesis. Involved in cell wall formation. Catalyzes the final step in the synthesis of UDP-N-acetylmuramoyl-pentapeptide, the precursor of murein. This chain is UDP-N-acetylmuramoyl-tripeptide--D-alanyl-D-alanine ligase, found in Treponema pallidum (strain Nichols).